The chain runs to 618 residues: MLTEALVAVRQGTQTPAAQTTCAPSTMSSSSRPPLETLQAQSVSADETPGSALPACAQPCETARSATPTGGETPNRSRYLSHRGNSIRQQQGILQEGFLLYSLDKFHETDKPDGIINLGTSENKLCHDLLHERLTRPDMLLLDPPLLQYPDWSGHQFLREEVAKFLTDYCCSPKPLKAENVVVMNGCASLFSCIASVICDPKDAILISTPFYGAITEHLGLYSDVKLYHIHLDCEASGEDGRLFHLTVDKLEEGLRRAEHEGFIVRGLVLMNPHNPLADIYTPKEMVGFLEFAKRNELHTIVDEVYMLSVFDESVTFDSVLSLESVPDPQRTHVMWGLGKDFAMAGIRVGTLYSESRDLVEAVAKLGAFHGIPGTTQRQVAQLLQDREWIDTQYLPRNRSRLKAARSYVTGELRGLDVPYLDRSAAMFVWADLRKFLAEPSFEEEMRLWRHFLKHKVVLSCGQAFSCSTPGWFRIVFSDQDRRLKLGMKRIKEALEEYKDQITVTDCYSIKDGGPRVRASGKDSDNAAIVGSTLPQGKSSDMLEEKDHTVQAGLGADELVLRDCQPSKPAEGLDSLIGTLRHQIRSSDWLEKNTPELSAGEDPEILDVFKALLERARK.

Residues 11–26 are compositionally biased toward low complexity; it reads QGTQTPAAQTTCAPST. Positions 11 to 54 are disordered; the sequence is QGTQTPAAQTTCAPSTMSSSSRPPLETLQAQSVSADETPGSALP. Residues 27–45 are compositionally biased toward polar residues; it reads MSSSSRPPLETLQAQSVSA. Glu-122 provides a ligand contact to substrate. Residue Lys-340 is modified to N6-(pyridoxal phosphate)lysine.

The protein belongs to the class-I pyridoxal-phosphate-dependent aminotransferase family.

This chain is 1-aminocyclopropane-1-carboxylate synthase-like protein 1 (accs), found in Takifugu rubripes (Japanese pufferfish).